Consider the following 430-residue polypeptide: Tol-Pal system protein TolB (430 aa).

The N-terminal stretch at 1-21 (MKQAFRVALGFLVLWASVLHA) is a signal peptide.

This sequence belongs to the TolB family. As to quaternary structure, the Tol-Pal system is composed of five core proteins: the inner membrane proteins TolA, TolQ and TolR, the periplasmic protein TolB and the outer membrane protein Pal. They form a network linking the inner and outer membranes and the peptidoglycan layer.

It is found in the periplasm. Part of the Tol-Pal system, which plays a role in outer membrane invagination during cell division and is important for maintaining outer membrane integrity. TolB occupies a key intermediary position in the Tol-Pal system because it communicates directly with both membrane-embedded components, Pal in the outer membrane and TolA in the inner membrane. The protein is Tol-Pal system protein TolB of Yersinia enterocolitica serotype O:8 / biotype 1B (strain NCTC 13174 / 8081).